Reading from the N-terminus, the 351-residue chain is Nicotinate-nucleotide--dimethylbenzimidazole phosphoribosyltransferase (351 aa).

The active-site Proton acceptor is Glu317.

The protein belongs to the CobT family.

The enzyme catalyses 5,6-dimethylbenzimidazole + nicotinate beta-D-ribonucleotide = alpha-ribazole 5'-phosphate + nicotinate + H(+). It functions in the pathway nucleoside biosynthesis; alpha-ribazole biosynthesis; alpha-ribazole from 5,6-dimethylbenzimidazole: step 1/2. Catalyzes the synthesis of alpha-ribazole-5'-phosphate from nicotinate mononucleotide (NAMN) and 5,6-dimethylbenzimidazole (DMB). The polypeptide is Nicotinate-nucleotide--dimethylbenzimidazole phosphoribosyltransferase (Pseudomonas aeruginosa (strain ATCC 15692 / DSM 22644 / CIP 104116 / JCM 14847 / LMG 12228 / 1C / PRS 101 / PAO1)).